The primary structure comprises 428 residues: Enolase (428 aa).

Position 165 (Q165) interacts with (2R)-2-phosphoglycerate. E207 (proton donor) is an active-site residue. Mg(2+) contacts are provided by D244, E285, and D312. 4 residues coordinate (2R)-2-phosphoglycerate: K337, R366, S367, and K388. The Proton acceptor role is filled by K337.

It belongs to the enolase family. Component of the RNA degradosome, a multiprotein complex involved in RNA processing and mRNA degradation. The cofactor is Mg(2+).

The protein resides in the cytoplasm. It localises to the secreted. Its subcellular location is the cell surface. The catalysed reaction is (2R)-2-phosphoglycerate = phosphoenolpyruvate + H2O. It functions in the pathway carbohydrate degradation; glycolysis; pyruvate from D-glyceraldehyde 3-phosphate: step 4/5. Its function is as follows. Catalyzes the reversible conversion of 2-phosphoglycerate (2-PG) into phosphoenolpyruvate (PEP). It is essential for the degradation of carbohydrates via glycolysis. This chain is Enolase, found in Coxiella burnetii (strain Dugway 5J108-111).